The chain runs to 465 residues: Serine/threonine-protein kinase 38 (465 aa).

Ala-2 carries the N-acetylalanine modification. Residues 62–87 (KRLRRSAHARKETEFLRLKRTRLGLE) form an interaction with S100B region. A Phosphothreonine modification is found at Thr-74. Residues 89–382 (FESLKVIGRG…VEEIKNNSFF (294 aa)) enclose the Protein kinase domain. ATP is bound by residues 95–103 (IGRGAFGEV) and Lys-118. Asp-212 serves as the catalytic Proton acceptor. Phosphoserine is present on Ser-264. A Phosphoserine; by autocatalysis modification is found at Ser-281. The short motif at 306-311 (WSLGVI) is the UFM1-interacting motif (UFIM) element. Positions 383-455 (EGVDWEHIRE…KRFEGLTARG (73 aa)) constitute an AGC-kinase C-terminal domain. Thr-444 carries the post-translational modification Phosphothreonine; by STK24/MST3.

This sequence belongs to the protein kinase superfamily. AGC Ser/Thr protein kinase family. Homodimeric S100B binds two molecules of STK38. Interacts with MOB1 and MOB2. Interacts with MAP3K1 and MAP3K2 (via the kinase domain). Forms a tripartite complex with MOBKL1B and STK3/MST2. Interacts with MICAL1; leading to inhibit the protein kinase activity by antagonizing activation by MST1/STK4. It depends on Mg(2+) as a cofactor. In terms of processing, ISGylated. Post-translationally, phosphorylated by STK3/MST2 and this is enhanced by MOBKL1B.

The protein localises to the nucleus. Its subcellular location is the cytoplasm. It is found in the chromosome. It carries out the reaction L-seryl-[protein] + ATP = O-phospho-L-seryl-[protein] + ADP + H(+). The enzyme catalyses L-threonyl-[protein] + ATP = O-phospho-L-threonyl-[protein] + ADP + H(+). Activated by binding of S100B which releases autoinhibitory N-lobe interactions, enabling ATP to bind and the autophosphorylation of Ser-281. Thr-444 then undergoes calcium-dependent phosphorylation by STK24/MST3. Interactions between phosphorylated Thr-444 and the N-lobe promote additional structural changes that complete the activation of the kinase. Autoinhibition is also released by the binding of MOB1/MOBKL1A and MOB2/HCCA2 to the N-terminal of STK38. In terms of biological role, serine/threonine-protein kinase that acts as a negative regulator of MAP3K1/2 signaling. Converts MAP3K2 from its phosphorylated form to its non-phosphorylated form and inhibits autophosphorylation of MAP3K2. Acts as an ufmylation 'reader' in a kinase-independent manner: specifically recognizes and binds mono-ufmylated histone H4 in response to DNA damage, promoting the recruitment of SUV39H1 to the double-strand breaks, resulting in ATM activation. The polypeptide is Serine/threonine-protein kinase 38 (STK38) (Bos taurus (Bovine)).